Consider the following 85-residue polypeptide: Putative defensin-like protein 79 (85 aa).

The N-terminal stretch at 1–31 (MKSEKSADAYGTYFLLISTIFLLFIARQASS) is a signal peptide. 4 cysteine pairs are disulfide-bonded: Cys37-Cys69, Cys44-Cys60, Cys47-Cys67, and Cys51-Cys68.

It belongs to the DEFL family.

The protein localises to the secreted. The protein is Putative defensin-like protein 79 of Arabidopsis thaliana (Mouse-ear cress).